The sequence spans 480 residues: Plant UBX domain-containing protein 10 (480 aa).

2 disordered regions span residues 47 to 78 and 335 to 383; these read DASS…PRGI and ADQA…AARV. The stretch at 330-389 forms a coiled coil; that stretch reads RAALEADQAREQQRQEEKERLEREAAEAERKLKEEEEARERAAREAEERQAARVRMRQEK. Over residues 336–383 the composition is skewed to basic and acidic residues; sequence DQAREQQRQEEKERLEREAAEAERKLKEEEEARERAAREAEERQAARV. The UBX domain occupies 399–477; it reads KGPDVTQVLV…GLHPQASLFI (79 aa).

This Arabidopsis thaliana (Mouse-ear cress) protein is Plant UBX domain-containing protein 10.